A 104-amino-acid chain; its full sequence is uncharacterized protein (104 aa).

This is an uncharacterized protein from Schizosaccharomyces pombe (strain 972 / ATCC 24843) (Fission yeast).